Consider the following 982-residue polypeptide: ATP-dependent DNA helicase Q5 (982 aa).

The Helicase ATP-binding domain occupies 39 to 213 (MAVVKGAEDV…FAALHLKQPV (175 aa)). Position 52 to 59 (52 to 59 (MPTGAGKS)) interacts with ATP. The short motif at 157-160 (DEAH) is the DEAH box element. Residues 241–398 (NLRDFCLKAL…NKPSDKATLL (158 aa)) enclose the Helicase C-terminal domain. Positions 412, 428, 432, and 435 each coordinate Zn(2+). A phosphoserine mark is found at S489 and S492. Residues 491–621 (GSGDEGRDEA…ASKDGQLYDM (131 aa)) form an interaction with POLR2A region. T527 carries the phosphothreonine modification. An interaction with RAD51 region spans residues 653 to 726 (PKRVGAGFSK…ALGSSVNCGD (74 aa)). Disordered regions lie at residues 675-797 (GKSH…PGKC) and 812-893 (QTEG…AQEP). Residue S728 is modified to Phosphoserine; by CDK1.

It belongs to the helicase family. RecQ subfamily. In terms of assembly, monomer. Interacts with TOP2A, TOP3A and TOP3B. Interacts with RNA polymerase II subunit POLR2A. Identified in a complex with the RNA polymerase II core bound to DNA. Interacts with RAD51. Interacts with WRN; this interaction stimulates WRN helicase activity on DNA fork duplexes. Interacts with MUS1; this interaction promotes MUS81-dependent mitotic DNA synthesis. Zn(2+) is required as a cofactor. In terms of processing, phosphorylated by CDK1 at Ser-728; this phosphorylation is required for RECQL5-mediated disruption of RAD51 filaments on stalled replication forks.

Its subcellular location is the nucleus. The protein localises to the nucleoplasm. The enzyme catalyses Couples ATP hydrolysis with the unwinding of duplex DNA by translocating in the 3'-5' direction.. It catalyses the reaction ATP + H2O = ADP + phosphate + H(+). Its function is as follows. DNA helicase that plays an important role in DNA replication, transcription and repair. Binds to the RNA polymerase II subunit POLR2A during transcription elongation and suppresses transcription-associated genomic instability. Also associates with POLR1A and enforces the stability of ribosomal DNA arrays. Plays an important role in mitotic chromosome separation after cross-over events and cell cycle progress. Mechanistically, removes RAD51 filaments protecting stalled replication forks at common fragile sites and stimulates MUS81-EME1 endonuclease leading to mitotic DNA synthesis. Required for efficient DNA repair, including repair of inter-strand cross-links. Stimulates DNA decatenation mediated by TOP2A. Prevents sister chromatid exchange and homologous recombination. In Mus musculus (Mouse), this protein is ATP-dependent DNA helicase Q5 (Recql5).